Here is a 145-residue protein sequence, read N- to C-terminus: Lymphocyte antigen 6 complex locus protein G5c (145 aa).

The N-terminal stretch at 1 to 38 (MSGLAASWSLKPLGPHGVTQALCAVLLAVLVTMNVVLG) is a signal peptide. In terms of domain architecture, UPAR/Ly6 spans 55 to 145 (LHCYRCLLET…NPKNRKNTMH (91 aa)). 5 disulfides stabilise this stretch: Cys-57–Cys-84, Cys-60–Cys-69, Cys-76–Cys-102, Cys-111–Cys-128, and Cys-129–Cys-134. An N-linked (GlcNAc...) asparagine glycan is attached at Asn-91.

As to quaternary structure, forms oligomers. N-glycosylated. In terms of tissue distribution, expression restricted to the caput of epididymis. Detected only from day 24 postnatum.

Its subcellular location is the secreted. In terms of biological role, may have a role in hematopoietic cell differentiation. This chain is Lymphocyte antigen 6 complex locus protein G5c (Ly6g5c), found in Rattus norvegicus (Rat).